We begin with the raw amino-acid sequence, 433 residues long: GPI mannosyltransferase 2 (433 aa).

Transmembrane regions (helical) follow at residues 4–24 (LVKP…IISL), 109–129 (TAVI…FYLT), 148–165 (ATFT…GFFT), 172–194 (LSFL…IIPY), 204–226 (FYYT…NCIL), 247–267 (ALLF…RQQF), 322–342 (IPNF…TFYF), 354–374 (LIFI…VQII), and 410–430 (GYIY…VFFL).

This sequence belongs to the PIGV family.

The protein localises to the endoplasmic reticulum membrane. Its pathway is glycolipid biosynthesis; glycosylphosphatidylinositol-anchor biosynthesis. Its function is as follows. Mannosyltransferase involved in glycosylphosphatidylinositol-anchor biosynthesis. Transfers the second mannose to the glycosylphosphatidylinositol during GPI precursor assembly. This is GPI mannosyltransferase 2 (GPI18) from Candida glabrata (strain ATCC 2001 / BCRC 20586 / JCM 3761 / NBRC 0622 / NRRL Y-65 / CBS 138) (Yeast).